Consider the following 196-residue polypeptide: Holliday junction branch migration complex subunit RuvA (196 aa).

Positions 1–63 are domain I; that stretch reads MYDYIKGKLS…DDAHLLFGFH (63 aa). The domain II stretch occupies residues 64–142; the sequence is TENEKEIFLN…EASGESATSR (79 aa). Residues 143–148 are flexible linker; that stretch reads KVSSEQ. A domain III region spans residues 148–196; that stretch reads QNSNLEEAMEALLALGYKATELKKVKAFFEGTNETVEQYIKSSLKMLMK.

It belongs to the RuvA family. Homotetramer. Forms an RuvA(8)-RuvB(12)-Holliday junction (HJ) complex. HJ DNA is sandwiched between 2 RuvA tetramers; dsDNA enters through RuvA and exits via RuvB. An RuvB hexamer assembles on each DNA strand where it exits the tetramer. Each RuvB hexamer is contacted by two RuvA subunits (via domain III) on 2 adjacent RuvB subunits; this complex drives branch migration. In the full resolvosome a probable DNA-RuvA(4)-RuvB(12)-RuvC(2) complex forms which resolves the HJ.

The protein resides in the cytoplasm. Its function is as follows. The RuvA-RuvB-RuvC complex processes Holliday junction (HJ) DNA during genetic recombination and DNA repair, while the RuvA-RuvB complex plays an important role in the rescue of blocked DNA replication forks via replication fork reversal (RFR). RuvA specifically binds to HJ cruciform DNA, conferring on it an open structure. The RuvB hexamer acts as an ATP-dependent pump, pulling dsDNA into and through the RuvAB complex. HJ branch migration allows RuvC to scan DNA until it finds its consensus sequence, where it cleaves and resolves the cruciform DNA. This is Holliday junction branch migration complex subunit RuvA from Streptococcus agalactiae serotype III (strain NEM316).